A 102-amino-acid polypeptide reads, in one-letter code: NADH-quinone oxidoreductase subunit K (102 aa).

A run of 3 helical transmembrane segments spans residues 5-25 (LAHY…GIFL), 31-51 (IILL…FVAF), and 62-82 (VFVF…LAIL).

This sequence belongs to the complex I subunit 4L family. In terms of assembly, NDH-1 is composed of 14 different subunits. Subunits NuoA, H, J, K, L, M, N constitute the membrane sector of the complex.

It is found in the cell inner membrane. It catalyses the reaction a quinone + NADH + 5 H(+)(in) = a quinol + NAD(+) + 4 H(+)(out). Functionally, NDH-1 shuttles electrons from NADH, via FMN and iron-sulfur (Fe-S) centers, to quinones in the respiratory chain. The immediate electron acceptor for the enzyme in this species is believed to be ubiquinone. Couples the redox reaction to proton translocation (for every two electrons transferred, four hydrogen ions are translocated across the cytoplasmic membrane), and thus conserves the redox energy in a proton gradient. This chain is NADH-quinone oxidoreductase subunit K, found in Bordetella petrii (strain ATCC BAA-461 / DSM 12804 / CCUG 43448).